The following is an 868-amino-acid chain: Protein NIP100 (868 aa).

One can recognise a CAP-Gly domain in the interval 34–84 (GETQFAKGIWYGIELDKPLGKNDGSANGIRYFDIDLKKANSNGGYYGLFCK). Coiled coils occupy residues 101-175 (LNGN…HLDN), 207-375 (LDQT…QEEL), and 645-776 (SLLS…QIKE).

Component of the dynactin complex composed of at least ARP1, JNM1, NIP100 and ARP10. Dynactin comprises a short rod of the ARP1 filament attached to ARP10 at its pointed-end and probably associated with the capping protein at its barbed-end. The rod is implicated in dynein cargo binding. A sidearm formed by NIP100 projects from the ARP1 filament and is implicated in motor binding.

The protein resides in the cytoplasm. It localises to the cytoskeleton. The protein localises to the spindle pole. Functionally, motor-binding component of the dynactin complex which assists cytoplasmic dynein by increasing its processivity and by regulation of its cargo binding. The dynactin complex is required for the spindle translocation late in anaphase and is involved in a cell wall synthesis checkpoint. The polypeptide is Protein NIP100 (NIP100) (Saccharomyces cerevisiae (strain ATCC 204508 / S288c) (Baker's yeast)).